The primary structure comprises 124 residues: MADTAVARRPSAPTTGRLYVKAIFTGFKRGLRTQSEHTSLLKLEGVFNKEDAGFYAGKRVVYLYKAHNKTLKTGHTVATRTRAIWGKITRPHGNAGAVRAKFHHNIPPSALGKRIRVLLYPSNI.

Position 2 is an N-acetylalanine (A2).

Belongs to the eukaryotic ribosomal protein eL33 family.

In Caenorhabditis elegans, this protein is Large ribosomal subunit protein eL33.